We begin with the raw amino-acid sequence, 356 residues long: MKQKLEGVVQRYEDLTYKLGDPSVINNPTEYRQVAREHNRLGPIVEKFRAYQKTERELDDVLEMLEGPLDPEERALFNQELRDLKEKLQTLSDELRILLLPRDPNDDKNVIMEIRAGAGGDEASLFAAELFRMYTRLAERHKWKTEVLSISENEAGGIKEVLFQINAEGAYSRLKYEGGVHRVQRVPVTESQGRIHTSTVTVAVMPEMEEVDIEIKPEDLKIEVQRAGGAGGQHVNKTESAVRMTHLPTGIVVYCADERSQMQNREKALRVLRARVADYYAQQAKSEEEQLRRAQVGTGERSEKIRTYNFPQDRVTDHRIGLTVHNIAAVMDGEIDHIIDALAQHEQAALLAREEA.

Gln-233 bears the N5-methylglutamine mark.

Belongs to the prokaryotic/mitochondrial release factor family. Post-translationally, methylated by PrmC. Methylation increases the termination efficiency of RF1.

The protein localises to the cytoplasm. Peptide chain release factor 1 directs the termination of translation in response to the peptide chain termination codons UAG and UAA. The chain is Peptide chain release factor 1 from Symbiobacterium thermophilum (strain DSM 24528 / JCM 14929 / IAM 14863 / T).